We begin with the raw amino-acid sequence, 205 residues long: Glycerol-3-phosphate acyltransferase (205 aa).

Residues 1–3 (MSA) are Periplasmic-facing. Residues 4–24 (IAPGMILFAYLCGSISSAILV) traverse the membrane as a helical segment. Residues 25 to 52 (CRLCGLPDPRTSGSGNPGATNVLRMGGK) lie on the Cytoplasmic side of the membrane. Residues 53–73 (GAALAVLIFDVLKGMLPVWGA) traverse the membrane as a helical segment. The Periplasmic portion of the chain corresponds to 74–80 (YELGVSP). Residues 81 to 101 (FWLGLIAIAACLGHIWPIFFG) traverse the membrane as a helical segment. Over 102 to 111 (FKGGKGVATA) the chain is Cytoplasmic. A helical membrane pass occupies residues 112-132 (FGAIAPIGWDLTGVMAGTWLL). At 133–137 (TVLLS) the chain is on the periplasmic side. Residues 138–158 (GYSSLGAIVSALIAPFYVWWF) form a helical membrane-spanning segment. Topologically, residues 159–205 (KPQFTFPVSMLSCLILLRHHDNIQRLWRRQETKIWTKLKRKREKDPE) are cytoplasmic.

It belongs to the PlsY family. In terms of assembly, probably interacts with PlsX.

The protein resides in the cell inner membrane. It catalyses the reaction sn-glycerol 3-phosphate + an acyl-CoA = a 1-acyl-sn-glycero-3-phosphate + CoA. The catalysed reaction is a fatty acyl-[ACP] + sn-glycerol 3-phosphate = a 1-acyl-sn-glycero-3-phosphate + holo-[ACP]. It participates in lipid metabolism; phospholipid metabolism. Catalyzes the transfer of an acyl group from acyl-ACP to glycerol-3-phosphate (G3P) to form lysophosphatidic acid (LPA). This enzyme can also utilize acyl-CoA as fatty acyl donor, but not acyl-PO(4). The chain is Glycerol-3-phosphate acyltransferase from Escherichia fergusonii (strain ATCC 35469 / DSM 13698 / CCUG 18766 / IAM 14443 / JCM 21226 / LMG 7866 / NBRC 102419 / NCTC 12128 / CDC 0568-73).